The following is a 97-amino-acid chain: Co-chaperonin GroES (97 aa).

Belongs to the GroES chaperonin family. Heptamer of 7 subunits arranged in a ring. Interacts with the chaperonin GroEL.

It localises to the cytoplasm. Functionally, together with the chaperonin GroEL, plays an essential role in assisting protein folding. The GroEL-GroES system forms a nano-cage that allows encapsulation of the non-native substrate proteins and provides a physical environment optimized to promote and accelerate protein folding. GroES binds to the apical surface of the GroEL ring, thereby capping the opening of the GroEL channel. This chain is Co-chaperonin GroES, found in Gemmatimonas aurantiaca (strain DSM 14586 / JCM 11422 / NBRC 100505 / T-27).